Here is a 445-residue protein sequence, read N- to C-terminus: Argininosuccinate synthase (445 aa).

ATP contacts are provided by residues 17-25 (AFSGGLDTS) and Ala-43. Residue Tyr-99 participates in L-citrulline binding. Residues Gly-129 and Thr-131 each contribute to the ATP site. Thr-131, Asn-135, and Asp-136 together coordinate L-aspartate. Asn-135 lines the L-citrulline pocket. Residue Asp-136 participates in ATP binding. 2 residues coordinate L-citrulline: Arg-139 and Ser-192. Position 194 (Asp-194) interacts with ATP. Residues Thr-201, Glu-203, and Glu-280 each contribute to the L-citrulline site.

Belongs to the argininosuccinate synthase family. Type 2 subfamily. In terms of assembly, homotetramer.

The protein resides in the cytoplasm. The enzyme catalyses L-citrulline + L-aspartate + ATP = 2-(N(omega)-L-arginino)succinate + AMP + diphosphate + H(+). It functions in the pathway amino-acid biosynthesis; L-arginine biosynthesis; L-arginine from L-ornithine and carbamoyl phosphate: step 2/3. The sequence is that of Argininosuccinate synthase from Afipia carboxidovorans (strain ATCC 49405 / DSM 1227 / KCTC 32145 / OM5) (Oligotropha carboxidovorans).